We begin with the raw amino-acid sequence, 374 residues long: N-acetyldiaminopimelate deacetylase (374 aa).

Asp69 is a catalytic residue. Glu128 serves as the catalytic Proton acceptor.

Belongs to the peptidase M20A family. N-acetyldiaminopimelate deacetylase subfamily.

It carries out the reaction N-acetyl-(2S,6S)-2,6-diaminopimelate + H2O = (2S,6S)-2,6-diaminopimelate + acetate. Its pathway is amino-acid biosynthesis; L-lysine biosynthesis via DAP pathway; LL-2,6-diaminopimelate from (S)-tetrahydrodipicolinate (acetylase route): step 3/3. Functionally, catalyzes the conversion of N-acetyl-diaminopimelate to diaminopimelate and acetate. This chain is N-acetyldiaminopimelate deacetylase, found in Bacillus velezensis (strain DSM 23117 / BGSC 10A6 / LMG 26770 / FZB42) (Bacillus amyloliquefaciens subsp. plantarum).